The following is a 462-amino-acid chain: Siroheme synthase (462 aa).

The segment at 1–203 (MQYFPIFVDT…GNNSKAEQMM (203 aa)) is precorrin-2 dehydrogenase /sirohydrochlorin ferrochelatase. NAD(+)-binding positions include 22–23 (EV) and 43–44 (PW). S128 bears the Phosphoserine mark. Positions 217-462 (GEVYLVGAGP…EKLNWFGADA (246 aa)) are uroporphyrinogen-III C-methyltransferase. Residue P226 participates in S-adenosyl-L-methionine binding. Residue D249 is the Proton acceptor of the active site. Residue K271 is the Proton donor of the active site. S-adenosyl-L-methionine-binding positions include 302 to 304 (GGD), I307, 332 to 333 (TA), M384, and A413.

This sequence in the N-terminal section; belongs to the precorrin-2 dehydrogenase / sirohydrochlorin ferrochelatase family. In the C-terminal section; belongs to the precorrin methyltransferase family.

It catalyses the reaction uroporphyrinogen III + 2 S-adenosyl-L-methionine = precorrin-2 + 2 S-adenosyl-L-homocysteine + H(+). It carries out the reaction precorrin-2 + NAD(+) = sirohydrochlorin + NADH + 2 H(+). The enzyme catalyses siroheme + 2 H(+) = sirohydrochlorin + Fe(2+). It participates in cofactor biosynthesis; adenosylcobalamin biosynthesis; precorrin-2 from uroporphyrinogen III: step 1/1. The protein operates within cofactor biosynthesis; adenosylcobalamin biosynthesis; sirohydrochlorin from precorrin-2: step 1/1. It functions in the pathway porphyrin-containing compound metabolism; siroheme biosynthesis; precorrin-2 from uroporphyrinogen III: step 1/1. Its pathway is porphyrin-containing compound metabolism; siroheme biosynthesis; siroheme from sirohydrochlorin: step 1/1. It participates in porphyrin-containing compound metabolism; siroheme biosynthesis; sirohydrochlorin from precorrin-2: step 1/1. Functionally, multifunctional enzyme that catalyzes the SAM-dependent methylations of uroporphyrinogen III at position C-2 and C-7 to form precorrin-2 via precorrin-1. Then it catalyzes the NAD-dependent ring dehydrogenation of precorrin-2 to yield sirohydrochlorin. Finally, it catalyzes the ferrochelation of sirohydrochlorin to yield siroheme. The polypeptide is Siroheme synthase (Pseudoalteromonas atlantica (strain T6c / ATCC BAA-1087)).